A 234-amino-acid chain; its full sequence is Leucyl/phenylalanyl-tRNA--protein transferase (234 aa).

The protein belongs to the L/F-transferase family.

It is found in the cytoplasm. The enzyme catalyses N-terminal L-lysyl-[protein] + L-leucyl-tRNA(Leu) = N-terminal L-leucyl-L-lysyl-[protein] + tRNA(Leu) + H(+). The catalysed reaction is N-terminal L-arginyl-[protein] + L-leucyl-tRNA(Leu) = N-terminal L-leucyl-L-arginyl-[protein] + tRNA(Leu) + H(+). It catalyses the reaction L-phenylalanyl-tRNA(Phe) + an N-terminal L-alpha-aminoacyl-[protein] = an N-terminal L-phenylalanyl-L-alpha-aminoacyl-[protein] + tRNA(Phe). Functions in the N-end rule pathway of protein degradation where it conjugates Leu, Phe and, less efficiently, Met from aminoacyl-tRNAs to the N-termini of proteins containing an N-terminal arginine or lysine. The protein is Leucyl/phenylalanyl-tRNA--protein transferase of Escherichia coli O7:K1 (strain IAI39 / ExPEC).